Consider the following 328-residue polypeptide: Tetraacyldisaccharide 4'-kinase (328 aa).

Residue 55-62 participates in ATP binding; the sequence is TAGGNGKT.

The protein belongs to the LpxK family.

The enzyme catalyses a lipid A disaccharide + ATP = a lipid IVA + ADP + H(+). It functions in the pathway glycolipid biosynthesis; lipid IV(A) biosynthesis; lipid IV(A) from (3R)-3-hydroxytetradecanoyl-[acyl-carrier-protein] and UDP-N-acetyl-alpha-D-glucosamine: step 6/6. In terms of biological role, transfers the gamma-phosphate of ATP to the 4'-position of a tetraacyldisaccharide 1-phosphate intermediate (termed DS-1-P) to form tetraacyldisaccharide 1,4'-bis-phosphate (lipid IVA). The sequence is that of Tetraacyldisaccharide 4'-kinase from Yersinia enterocolitica serotype O:8 / biotype 1B (strain NCTC 13174 / 8081).